Consider the following 929-residue polypeptide: Isoleucine--tRNA ligase (929 aa).

The 'HIGH' region motif lies at 57 to 67 (PYANGNIHVGH). Position 554 (E554) interacts with L-isoleucyl-5'-AMP. Residues 595–599 (KMSKS) carry the 'KMSKS' region motif. Position 598 (K598) interacts with ATP. Positions 888, 891, 908, and 911 each coordinate Zn(2+).

The protein belongs to the class-I aminoacyl-tRNA synthetase family. IleS type 1 subfamily. In terms of assembly, monomer. Requires Zn(2+) as cofactor.

It is found in the cytoplasm. The catalysed reaction is tRNA(Ile) + L-isoleucine + ATP = L-isoleucyl-tRNA(Ile) + AMP + diphosphate. In terms of biological role, catalyzes the attachment of isoleucine to tRNA(Ile). As IleRS can inadvertently accommodate and process structurally similar amino acids such as valine, to avoid such errors it has two additional distinct tRNA(Ile)-dependent editing activities. One activity is designated as 'pretransfer' editing and involves the hydrolysis of activated Val-AMP. The other activity is designated 'posttransfer' editing and involves deacylation of mischarged Val-tRNA(Ile). In Streptococcus thermophilus (strain ATCC BAA-491 / LMD-9), this protein is Isoleucine--tRNA ligase.